The chain runs to 156 residues: Small ribosomal subunit protein uS7 (156 aa).

This sequence belongs to the universal ribosomal protein uS7 family. As to quaternary structure, part of the 30S ribosomal subunit. Contacts proteins S9 and S11.

Its function is as follows. One of the primary rRNA binding proteins, it binds directly to 16S rRNA where it nucleates assembly of the head domain of the 30S subunit. Is located at the subunit interface close to the decoding center, probably blocks exit of the E-site tRNA. In Clostridioides difficile (strain 630) (Peptoclostridium difficile), this protein is Small ribosomal subunit protein uS7.